A 284-amino-acid polypeptide reads, in one-letter code: 4-diphosphocytidyl-2-C-methyl-D-erythritol kinase (284 aa).

K14 is an active-site residue. 98 to 108 (PMGGGLGGGSS) is a binding site for ATP. The active site involves D140.

The protein belongs to the GHMP kinase family. IspE subfamily.

The catalysed reaction is 4-CDP-2-C-methyl-D-erythritol + ATP = 4-CDP-2-C-methyl-D-erythritol 2-phosphate + ADP + H(+). It participates in isoprenoid biosynthesis; isopentenyl diphosphate biosynthesis via DXP pathway; isopentenyl diphosphate from 1-deoxy-D-xylulose 5-phosphate: step 3/6. Functionally, catalyzes the phosphorylation of the position 2 hydroxy group of 4-diphosphocytidyl-2C-methyl-D-erythritol. This is 4-diphosphocytidyl-2-C-methyl-D-erythritol kinase from Shewanella halifaxensis (strain HAW-EB4).